Reading from the N-terminus, the 385-residue chain is 1-deoxy-D-xylulose 5-phosphate reductoisomerase (385 aa).

Residues Thr10, Gly11, Ser12, Ile13, Lys37, and Asn124 each coordinate NADPH. Lys125 provides a ligand contact to 1-deoxy-D-xylulose 5-phosphate. Glu126 contacts NADPH. Mn(2+) is bound at residue Asp150. Residues Ser151, Glu152, Ser176, and His199 each coordinate 1-deoxy-D-xylulose 5-phosphate. Glu152 lines the Mn(2+) pocket. Gly205 is an NADPH binding site. 1-deoxy-D-xylulose 5-phosphate contacts are provided by Ser212, Asn217, Lys218, and Glu221. Glu221 contributes to the Mn(2+) binding site.

Belongs to the DXR family. Mg(2+) serves as cofactor. Mn(2+) is required as a cofactor.

The catalysed reaction is 2-C-methyl-D-erythritol 4-phosphate + NADP(+) = 1-deoxy-D-xylulose 5-phosphate + NADPH + H(+). It functions in the pathway isoprenoid biosynthesis; isopentenyl diphosphate biosynthesis via DXP pathway; isopentenyl diphosphate from 1-deoxy-D-xylulose 5-phosphate: step 1/6. Its function is as follows. Catalyzes the NADPH-dependent rearrangement and reduction of 1-deoxy-D-xylulose-5-phosphate (DXP) to 2-C-methyl-D-erythritol 4-phosphate (MEP). This chain is 1-deoxy-D-xylulose 5-phosphate reductoisomerase, found in Clostridium botulinum (strain Okra / Type B1).